The sequence spans 208 residues: Putative archaetidylserine decarboxylase proenzyme (208 aa).

Catalysis depends on Ser172, which acts as the Schiff-base intermediate with substrate; via pyruvic acid. Residue Ser172 is modified to Pyruvic acid (Ser); by autocatalysis.

This sequence belongs to the phosphatidylserine decarboxylase family. PSD-A subfamily. As to quaternary structure, heterodimer of a large membrane-associated beta subunit and a small pyruvoyl-containing alpha subunit. Pyruvate is required as a cofactor. Is synthesized initially as an inactive proenzyme. Formation of the active enzyme involves a self-maturation process in which the active site pyruvoyl group is generated from an internal serine residue via an autocatalytic post-translational modification. Two non-identical subunits are generated from the proenzyme in this reaction, and the pyruvate is formed at the N-terminus of the alpha chain, which is derived from the carboxyl end of the proenzyme. The post-translation cleavage follows an unusual pathway, termed non-hydrolytic serinolysis, in which the side chain hydroxyl group of the serine supplies its oxygen atom to form the C-terminus of the beta chain, while the remainder of the serine residue undergoes an oxidative deamination to produce ammonia and the pyruvoyl prosthetic group on the alpha chain.

The protein localises to the cell membrane. It catalyses the reaction archaetidylserine + H(+) = archaetidylethanolamine + CO2. Its function is as follows. Catalyzes the formation of archaetidylethanolamine (PtdEtn) from archaetidylserine (PtdSer). This chain is Putative archaetidylserine decarboxylase proenzyme, found in Methanosarcina acetivorans (strain ATCC 35395 / DSM 2834 / JCM 12185 / C2A).